The chain runs to 111 residues: Ig kappa chain V-III region PC 2880/PC 1229 (111 aa).

Residues D1–C23 form a framework-1 region. A disulfide bridge links C23 with C92. Residues R24–N38 form a complementarity-determining-1 region. Residues W39–Y53 form a framework-2 region. Residues A54–S60 form a complementarity-determining-2 region. A framework-3 region spans residues G61 to C92. A complementarity-determining-3 region spans residues Q93–T101. Positions F102–K111 are framework-4.

In Mus musculus (Mouse), this protein is Ig kappa chain V-III region PC 2880/PC 1229.